A 497-amino-acid chain; its full sequence is Ethanolamine-phosphate phospho-lyase (497 aa).

An N6-(pyridoxal phosphate)lysine modification is found at Lys-278. The disordered stretch occupies residues 440–497; sequence TGAETESGISKNTPCRTKMPKEAQSELLRDSSLESRENPSQKRNGLCTDSLLSKRLRT. The segment covering 458–479 has biased composition (basic and acidic residues); it reads MPKEAQSELLRDSSLESRENPS.

Belongs to the class-III pyridoxal-phosphate-dependent aminotransferase family. Homotetramer. Requires pyridoxal 5'-phosphate as cofactor.

The protein localises to the mitochondrion. The catalysed reaction is phosphoethanolamine + H2O = acetaldehyde + NH4(+) + phosphate. In terms of biological role, catalyzes the pyridoxal-phosphate-dependent breakdown of phosphoethanolamine, converting it to ammonia, inorganic phosphate and acetaldehyde. The sequence is that of Ethanolamine-phosphate phospho-lyase (ETNPPL) from Bos taurus (Bovine).